The primary structure comprises 393 residues: Outer membrane protein assembly factor BamB (393 aa).

Residues 1-19 (MQLRKTLLVGLVSVALLSG) form the signal peptide. Cysteine 20 carries N-palmitoyl cysteine lipidation. Residue cysteine 20 is the site of S-diacylglycerol cysteine attachment.

Belongs to the BamB family. As to quaternary structure, part of the Bam complex, which is composed of the outer membrane protein BamA, and four lipoproteins BamB, BamC, BamD and BamE.

It is found in the cell outer membrane. Functionally, part of the outer membrane protein assembly complex, which is involved in assembly and insertion of beta-barrel proteins into the outer membrane. The polypeptide is Outer membrane protein assembly factor BamB (Yersinia pestis).